Reading from the N-terminus, the 199-residue chain is Protein Thf1 (199 aa).

Residues 167–198 (QYSRVEKDISMYKSNIEKMKQALEIIALNLKT) are a coiled coil.

This sequence belongs to the THF1 family.

In terms of biological role, may be involved in photosynthetic membrane biogenesis. The chain is Protein Thf1 from Prochlorococcus marinus (strain NATL1A).